A 319-amino-acid polypeptide reads, in one-letter code: Transcription initiation factor IIB 6 (319 aa).

Over residues 1–16 (MTDARMRSREQERTDE) the composition is skewed to basic and acidic residues. The tract at residues 1 to 33 (MTDARMRSREQERTDETESESTDGCPECGGLVV) is disordered. A TFIIB-type zinc finger spans residues 21 to 51 (STDGCPECGGLVVNDEEHGESVCADCGLVVE). Residues Cys-25, Cys-28, Cys-43, and Cys-46 each contribute to the Zn(2+) site. The segment covering 59–74 (PEWRAFDSKEKDEKSR) has biased composition (basic and acidic residues). The interval 59–89 (PEWRAFDSKEKDEKSRVGAPTTNTMHDKGLS) is disordered. 2 consecutive repeat copies span residues 137–220 (GEID…VREL) and 231–312 (SYVP…ELLE).

The protein belongs to the TFIIB family.

In terms of biological role, stabilizes TBP binding to an archaeal box-A promoter. Also responsible for recruiting RNA polymerase II to the pre-initiation complex (DNA-TBP-TFIIB). In Halobacterium salinarum (strain ATCC 700922 / JCM 11081 / NRC-1) (Halobacterium halobium), this protein is Transcription initiation factor IIB 6.